A 166-amino-acid polypeptide reads, in one-letter code: Large ribosomal subunit protein uL10 (166 aa).

It belongs to the universal ribosomal protein uL10 family. As to quaternary structure, part of the ribosomal stalk of the 50S ribosomal subunit. The N-terminus interacts with L11 and the large rRNA to form the base of the stalk. The C-terminus forms an elongated spine to which L12 dimers bind in a sequential fashion forming a multimeric L10(L12)X complex.

Its function is as follows. Forms part of the ribosomal stalk, playing a central role in the interaction of the ribosome with GTP-bound translation factors. This is Large ribosomal subunit protein uL10 from Streptococcus sanguinis (strain SK36).